Here is a 312-residue protein sequence, read N- to C-terminus: Glycerol-3-phosphate phosphatase (312 aa).

Residue D30 is the Nucleophile of the active site. Mg(2+) contacts are provided by D30, D32, and D251. Catalysis depends on D32, which acts as the Proton donor.

It belongs to the HAD-like hydrolase superfamily. CbbY/CbbZ/Gph/YieH family. In terms of assembly, homodimer. Mg(2+) is required as a cofactor.

It carries out the reaction O-phospho-L-tyrosyl-[protein] + H2O = L-tyrosyl-[protein] + phosphate. The catalysed reaction is sn-glycerol 1-phosphate + H2O = glycerol + phosphate. It catalyses the reaction sn-glycerol 3-phosphate + H2O = glycerol + phosphate. Functionally, glycerol-3-phosphate phosphatase hydrolyzing glycerol-3-phosphate into glycerol. Thereby, regulates the cellular levels of glycerol-3-phosphate a metabolic intermediate of glucose, lipid and energy metabolism. Was also shown to have a 2-phosphoglycolate phosphatase activity and a tyrosine-protein phosphatase activity. However, their physiological relevance is unclear. In vitro, also has a phosphatase activity toward ADP, ATP, GDP and GTP. The sequence is that of Glycerol-3-phosphate phosphatase from Gallus gallus (Chicken).